The primary structure comprises 224 residues: Elongation factor 1-beta 2 (224 aa).

Alanine 2 carries the N-acetylalanine modification. Positions 14 to 65 constitute a GST C-terminal domain; sequence VKSVEEHLAGKTYISGDQLSVDDVKVYAAVPVKPSDAFPNASKWYESVASQL. The segment at 89-139 is disordered; sequence EAEAPAAAADDDDDMDLFGDETEEEKKAAEEREAAKKDTKKPKESGKSSVL. Over residues 97–111 the composition is skewed to acidic residues; that stretch reads ADDDDDMDLFGDETE. Residues 112 to 134 are compositionally biased toward basic and acidic residues; that stretch reads EEKKAAEEREAAKKDTKKPKESG.

It belongs to the EF-1-beta/EF-1-delta family. As to quaternary structure, EF-1 is composed of 4 subunits: alpha, beta (1B-alpha=beta'), delta (1B-beta), and gamma (1B-gamma).

In terms of biological role, EF-1-beta and EF-1-delta stimulate the exchange of GDP bound to EF-1-alpha to GTP. The chain is Elongation factor 1-beta 2 from Arabidopsis thaliana (Mouse-ear cress).